Here is a 49-residue protein sequence, read N- to C-terminus: uncharacterized protein (49 aa).

Residues 5–27 (ILEILSAFIRILFKLLYCWALFF) traverse the membrane as a helical segment.

Its subcellular location is the membrane. This is an uncharacterized protein from Saccharomyces cerevisiae (strain ATCC 204508 / S288c) (Baker's yeast).